We begin with the raw amino-acid sequence, 446 residues long: Phosphoglucosamine mutase (446 aa).

The Phosphoserine intermediate role is filled by Ser102. Mg(2+) contacts are provided by Ser102, Asp241, Asp243, and Asp245. Ser102 is subject to Phosphoserine.

The protein belongs to the phosphohexose mutase family. The cofactor is Mg(2+). Activated by phosphorylation.

It catalyses the reaction alpha-D-glucosamine 1-phosphate = D-glucosamine 6-phosphate. Its function is as follows. Catalyzes the conversion of glucosamine-6-phosphate to glucosamine-1-phosphate. The sequence is that of Phosphoglucosamine mutase from Yersinia enterocolitica serotype O:8 / biotype 1B (strain NCTC 13174 / 8081).